A 318-amino-acid polypeptide reads, in one-letter code: MTTGAELQKYDPYRTFTREQWAKLRDDTPMTLRAEEIERMHSMLDRLDIKEVEEIYLPLSRLLSFYVSAARRLFESERRFLRIRDRKMPYIIGVAGSVAVGKSTTARVLQALLARWSPKPKVDLITTDGFLHSNAYLERAGLMDKKGFPESYNLGALLTFLSDIKAGRRDVRAPVYSHLTYDIVPNETIEIDQPDILIVEGLNVLQTGRLPADGKAVPFISDFFDFSVYIDADESTLQEWYAARFLKLRDTAFSDPRSYFHRYAGLSDEAAREKALSIWNKINRVNLRENVLPTRPRATLILKKGSDHVVERVSLRRL.

96–103 (GSVAVGKS) contacts ATP.

This sequence belongs to the prokaryotic pantothenate kinase family.

The protein resides in the cytoplasm. The enzyme catalyses (R)-pantothenate + ATP = (R)-4'-phosphopantothenate + ADP + H(+). The protein operates within cofactor biosynthesis; coenzyme A biosynthesis; CoA from (R)-pantothenate: step 1/5. The chain is Pantothenate kinase from Afipia carboxidovorans (strain ATCC 49405 / DSM 1227 / KCTC 32145 / OM5) (Oligotropha carboxidovorans).